A 336-amino-acid polypeptide reads, in one-letter code: MKERIVNLETLDFETSQEVSLRPNLWEDFIGQEKIKSNLQISICAAKKRQESLDHMLFFGPPGLGKTSISHIIAKEMETNIKITAAPMIEKSGDLAAILTNLQAKDILFIDEIHRLSPAIEEVLYPAMEDFRLDIIIGSGPAAQTIKIDLPPFTLIGATTRAGMLSNPLRDRFGMSFRMQFYSPSELSLIIKKAAVKLNQDIKEESADEIAKRSRGTPRIALRLLKRVRDFALVKNSSLMDLNITLHALNELGVNELGFDEADLAYLSLLANAQGRPVGLNTIAASMREDEGTIEDVIEPFLLANGYLERTAKGRIATPKTHALLKIPTLNPQTLF.

Residues M1–Y182 form a large ATPase domain (RuvB-L) region. Residues L21, R22, G63, K66, T67, S68, E129–F131, R172, Y182, and R219 each bind ATP. T67 is a Mg(2+) binding site. The interval S183–G253 is small ATPAse domain (RuvB-S). Positions E256–F336 are head domain (RuvB-H). DNA-binding residues include R310 and R315.

The protein belongs to the RuvB family. As to quaternary structure, homohexamer. Forms an RuvA(8)-RuvB(12)-Holliday junction (HJ) complex. HJ DNA is sandwiched between 2 RuvA tetramers; dsDNA enters through RuvA and exits via RuvB. An RuvB hexamer assembles on each DNA strand where it exits the tetramer. Each RuvB hexamer is contacted by two RuvA subunits (via domain III) on 2 adjacent RuvB subunits; this complex drives branch migration. In the full resolvosome a probable DNA-RuvA(4)-RuvB(12)-RuvC(2) complex forms which resolves the HJ.

The protein resides in the cytoplasm. The catalysed reaction is ATP + H2O = ADP + phosphate + H(+). Functionally, the RuvA-RuvB-RuvC complex processes Holliday junction (HJ) DNA during genetic recombination and DNA repair, while the RuvA-RuvB complex plays an important role in the rescue of blocked DNA replication forks via replication fork reversal (RFR). RuvA specifically binds to HJ cruciform DNA, conferring on it an open structure. The RuvB hexamer acts as an ATP-dependent pump, pulling dsDNA into and through the RuvAB complex. RuvB forms 2 homohexamers on either side of HJ DNA bound by 1 or 2 RuvA tetramers; 4 subunits per hexamer contact DNA at a time. Coordinated motions by a converter formed by DNA-disengaged RuvB subunits stimulates ATP hydrolysis and nucleotide exchange. Immobilization of the converter enables RuvB to convert the ATP-contained energy into a lever motion, pulling 2 nucleotides of DNA out of the RuvA tetramer per ATP hydrolyzed, thus driving DNA branch migration. The RuvB motors rotate together with the DNA substrate, which together with the progressing nucleotide cycle form the mechanistic basis for DNA recombination by continuous HJ branch migration. Branch migration allows RuvC to scan DNA until it finds its consensus sequence, where it cleaves and resolves cruciform DNA. This chain is Holliday junction branch migration complex subunit RuvB, found in Helicobacter pylori (strain P12).